We begin with the raw amino-acid sequence, 297 residues long: Polyamine aminopropyltransferase 2 (297 aa).

The PABS domain maps to 26–258 (FYWEPDVEGG…DLWTFFVALK (233 aa)). Gln-53 serves as a coordination point for S-methyl-5'-thioadenosine. Residues His-84 and Glu-108 each coordinate spermidine. S-methyl-5'-thioadenosine-binding positions include Asp-128 and 157 to 158 (DV). Asp-176 serves as the catalytic Proton acceptor. Pro-184 contributes to the S-methyl-5'-thioadenosine binding site.

This sequence belongs to the spermidine/spermine synthase family. In terms of assembly, homodimer or homotetramer.

It is found in the cytoplasm. It carries out the reaction S-adenosyl 3-(methylsulfanyl)propylamine + putrescine = S-methyl-5'-thioadenosine + spermidine + H(+). It participates in amine and polyamine biosynthesis; spermidine biosynthesis; spermidine from putrescine: step 1/1. In terms of biological role, catalyzes the irreversible transfer of a propylamine group from the amino donor S-adenosylmethioninamine (decarboxy-AdoMet) to putrescine (1,4-diaminobutane) to yield spermidine. This chain is Polyamine aminopropyltransferase 2, found in Caldanaerobacter subterraneus subsp. tengcongensis (strain DSM 15242 / JCM 11007 / NBRC 100824 / MB4) (Thermoanaerobacter tengcongensis).